The primary structure comprises 732 residues: Copper-transporting ATPase (732 aa).

At 1-88 (MTKAQFYIEG…NPSFLTPNVK (88 aa)) the chain is on the cytoplasmic side. The HMA domain maps to 2-68 (TKAQFYIEGM…QIEKLGYQPR (67 aa)). Residues C13 and C16 each coordinate Cu(+). Residues 89–109 (LALVLLGTLGVLALSMFAPLL) traverse the membrane as a helical segment. At 110-122 (PLPSFLKNPFING) the chain is on the extracellular side. The chain crosses the membrane as a helical span at residues 123–142 (IVQLVLSLMVMHMGRNFYVH). The Cytoplasmic portion of the chain corresponds to 143-149 (GFKALWA). Residues 150–170 (RQPNMDSLIALGTSAALLYSL) form a helical membrane-spanning segment. Residues 171-187 (VLLFRAYTHAPIEGYYF) are Extracellular-facing. The helical transmembrane segment at 188–208 (ESVCVILLFVMAGKRVEENSK) threads the bilayer. Over 209–336 (DKALEAMQSL…KAPIARLADK (128 aa)) the chain is Cytoplasmic. Residues 337-359 (VAGVFVPIVIGIASIAFLVWLVL) form a helical membrane-spanning segment. The Extracellular segment spans residues 360 to 365 (GDFTRA). The helical transmembrane segment at 366-383 (LEVFIAILVISCPCALGL) threads the bilayer. At 384–663 (ATPMALLVAQ…KLSALTIANI (280 aa)) the chain is on the cytoplasmic side. D421 acts as the 4-aspartylphosphate intermediate in catalysis. Residues D609 and D613 each contribute to the Mg(2+) site. Residues 664–683 (KQNLFWAFCYNSIAIPLACG) traverse the membrane as a helical segment. The Extracellular portion of the chain corresponds to 684 to 694 (VAYKLGIMFNP). A helical membrane pass occupies residues 695–713 (MLASLAMSLSSVSVVLNAQ). Residues 714–732 (RLRGAHFKIRGSHENRHSS) lie on the Cytoplasmic side of the membrane.

Belongs to the cation transport ATPase (P-type) (TC 3.A.3) family. Type IB subfamily.

It localises to the cell membrane. The catalysed reaction is Cu(+)(in) + ATP + H2O = Cu(+)(out) + ADP + phosphate + H(+). Functionally, probably involved in copper export. The sequence is that of Copper-transporting ATPase (copA) from Helicobacter felis (strain ATCC 49179 / CCUG 28539 / NCTC 12436 / CS1).